The following is a 397-amino-acid chain: Phosphoglycerate kinase (397 aa).

Residues 22 to 24 (DYN), arginine 38, 61 to 64 (HLGR), arginine 119, and arginine 152 each bind substrate. ATP contacts are provided by residues lysine 203, glycine 294, glutamate 325, and 351–354 (GGDT).

The protein belongs to the phosphoglycerate kinase family. Monomer.

It is found in the cytoplasm. It catalyses the reaction (2R)-3-phosphoglycerate + ATP = (2R)-3-phospho-glyceroyl phosphate + ADP. The protein operates within carbohydrate degradation; glycolysis; pyruvate from D-glyceraldehyde 3-phosphate: step 2/5. The polypeptide is Phosphoglycerate kinase (pgk) (Aquifex aeolicus (strain VF5)).